Reading from the N-terminus, the 265-residue chain is Speedy protein E13 (265 aa).

Positions 1–80 (MGQILGKIMM…EPEKELAPEP (80 aa)) are disordered. Over residues 66–80 (DESDDEPEKELAPEP) the composition is skewed to acidic residues.

This sequence belongs to the Speedy/Ringo family.

This chain is Speedy protein E13, found in Homo sapiens (Human).